Consider the following 377-residue polypeptide: uncharacterized protein (377 aa).

Residues 1 to 46 are disordered; it reads MLAGLRRRGSMTTPPGPEIPPPHQGGFYSAGHHPQRPWPETPPPKT. Pro residues-rich tracts occupy residues 14-23 and 36-45; these read PPGPEIPPPH and RPWPETPPPK. A helical membrane pass occupies residues 53–73; it reads MLGAVALLAVVGVTVAVTLAV. Residues 77–107 form a disordered region; sequence DKRDAIPPGSGVSGSPTASDIASADDSGPVS.

The protein resides in the cell inner membrane. In terms of biological role, may be involved in the ESX-1 / type VII specialized secretion system (T7SS), which exports several proteins including EsxA and EsxB. Involved in DNA conjugation in the recipient strain. This is an uncharacterized protein from Mycolicibacterium smegmatis (strain MKD8) (Mycobacterium smegmatis).